Consider the following 698-residue polypeptide: Glycine--tRNA ligase beta subunit (698 aa).

This sequence belongs to the class-II aminoacyl-tRNA synthetase family. As to quaternary structure, tetramer of two alpha and two beta subunits.

It localises to the cytoplasm. It catalyses the reaction tRNA(Gly) + glycine + ATP = glycyl-tRNA(Gly) + AMP + diphosphate. The protein is Glycine--tRNA ligase beta subunit of Xanthomonas campestris pv. campestris (strain 8004).